The primary structure comprises 494 residues: Ketol-acid reductoisomerase (NADP(+)) (494 aa).

Positions 14 to 208 (LDQLGRCRFM…GGHRAGCLES (195 aa)) constitute a KARI N-terminal Rossmann domain. Residues 45–48 (CGAQ), R68, R76, S78, and 108–110 (DKQ) contribute to the NADP(+) site. Residue H132 is part of the active site. Residue G158 participates in NADP(+) binding. 2 KARI C-terminal knotted domains span residues 209–344 (SFVA…NYPS) and 345–487 (TDVE…MTDM). Positions 217, 221, 389, and 393 each coordinate Mg(2+). S414 lines the substrate pocket.

The protein belongs to the ketol-acid reductoisomerase family. It depends on Mg(2+) as a cofactor.

It catalyses the reaction (2R)-2,3-dihydroxy-3-methylbutanoate + NADP(+) = (2S)-2-acetolactate + NADPH + H(+). The catalysed reaction is (2R,3R)-2,3-dihydroxy-3-methylpentanoate + NADP(+) = (S)-2-ethyl-2-hydroxy-3-oxobutanoate + NADPH + H(+). It functions in the pathway amino-acid biosynthesis; L-isoleucine biosynthesis; L-isoleucine from 2-oxobutanoate: step 2/4. The protein operates within amino-acid biosynthesis; L-valine biosynthesis; L-valine from pyruvate: step 2/4. Its function is as follows. Involved in the biosynthesis of branched-chain amino acids (BCAA). Catalyzes an alkyl-migration followed by a ketol-acid reduction of (S)-2-acetolactate (S2AL) to yield (R)-2,3-dihydroxy-isovalerate. In the isomerase reaction, S2AL is rearranged via a Mg-dependent methyl migration to produce 3-hydroxy-3-methyl-2-ketobutyrate (HMKB). In the reductase reaction, this 2-ketoacid undergoes a metal-dependent reduction by NADPH to yield (R)-2,3-dihydroxy-isovalerate. This Vibrio vulnificus (strain CMCP6) protein is Ketol-acid reductoisomerase (NADP(+)).